We begin with the raw amino-acid sequence, 192 residues long: Ion-translocating oxidoreductase complex subunit B (192 aa).

The segment at 1–26 (MNAIWIAVAAVSLLALAFGAILGYAS) is hydrophobic. Positions 32 to 91 (EDDPVVEKIDEILPQSQCGQCGYPGCRPYAEAISCNGEKINRCAPGGEAVMLKIAELLNV) constitute a 4Fe-4S domain. 12 residues coordinate [4Fe-4S] cluster: Cys49, Cys52, Cys57, Cys74, Cys117, Cys120, Cys123, Cys127, Cys147, Cys150, Cys153, and Cys157. 4Fe-4S ferredoxin-type domains lie at 108–137 (MVAV…GATR) and 138–167 (AMHT…LQPV).

Belongs to the 4Fe4S bacterial-type ferredoxin family. RnfB subfamily. In terms of assembly, the complex is composed of six subunits: RsxA, RsxB, RsxC, RsxD, RsxE and RsxG. [4Fe-4S] cluster is required as a cofactor.

The protein localises to the cell inner membrane. Functionally, part of a membrane-bound complex that couples electron transfer with translocation of ions across the membrane. Required to maintain the reduced state of SoxR. The chain is Ion-translocating oxidoreductase complex subunit B from Escherichia coli O81 (strain ED1a).